Here is a 195-residue protein sequence, read N- to C-terminus: Cysteine/O-acetylserine efflux protein (195 aa).

At 1-7 (MTPTLLS) the chain is on the periplasmic side. The chain crosses the membrane as a helical span at residues 8–28 (AFWTYTLITAMTPGPNNILAL). The Cytoplasmic portion of the chain corresponds to 29-46 (SSATSHGFRQSTRVLAGM). The helical transmembrane segment at 47–67 (SLGFLIVMLLCAGISFSLAVI) threads the bilayer. The Periplasmic portion of the chain corresponds to 68-69 (DP). Residues 70 to 90 (AAVHLLSWAGAAYIVWLAWKI) form a helical membrane-spanning segment. The Cytoplasmic portion of the chain corresponds to 91 to 104 (ATSPTKEDGLQAKP). Residues 105–125 (ISFWASFALQFVNVKIILYGV) form a helical membrane-spanning segment. Topologically, residues 126–141 (TALSTFVLPQTQALSW) are periplasmic. The chain crosses the membrane as a helical span at residues 142–162 (VVGVSVLLAMIGTFGNVCWAL). Over 163–176 (AGHLFQRLFRQYGR) the chain is Cytoplasmic. Residues 177-194 (QLNIVLALLLVYCAVRIF) form a helical membrane-spanning segment. Position 195 (Tyr-195) is a topological domain, periplasmic.

This sequence belongs to the Rht family.

The protein resides in the cell inner membrane. The catalysed reaction is O-acetyl-L-serine(in) = O-acetyl-L-serine(out). The enzyme catalyses L-cysteine(in) = L-cysteine(out). Its function is as follows. Exporter of O-acetylserine (OAS) and cysteine. The chain is Cysteine/O-acetylserine efflux protein (eamB) from Escherichia coli O9:H4 (strain HS).